We begin with the raw amino-acid sequence, 376 residues long: N-acetyldiaminopimelate deacetylase (376 aa).

The active site involves D69. The Proton acceptor role is filled by E128.

The protein belongs to the peptidase M20A family. N-acetyldiaminopimelate deacetylase subfamily.

It catalyses the reaction N-acetyl-(2S,6S)-2,6-diaminopimelate + H2O = (2S,6S)-2,6-diaminopimelate + acetate. It functions in the pathway amino-acid biosynthesis; L-lysine biosynthesis via DAP pathway; LL-2,6-diaminopimelate from (S)-tetrahydrodipicolinate (acetylase route): step 3/3. Functionally, catalyzes the conversion of N-acetyl-diaminopimelate to diaminopimelate and acetate. This is N-acetyldiaminopimelate deacetylase from Bacillus cereus (strain AH820).